Reading from the N-terminus, the 209-residue chain is Ribosomal RNA large subunit methyltransferase E (209 aa).

Positions 63, 65, 83, 99, and 124 each coordinate S-adenosyl-L-methionine. Catalysis depends on K164, which acts as the Proton acceptor.

It belongs to the class I-like SAM-binding methyltransferase superfamily. RNA methyltransferase RlmE family.

It localises to the cytoplasm. The catalysed reaction is uridine(2552) in 23S rRNA + S-adenosyl-L-methionine = 2'-O-methyluridine(2552) in 23S rRNA + S-adenosyl-L-homocysteine + H(+). In terms of biological role, specifically methylates the uridine in position 2552 of 23S rRNA at the 2'-O position of the ribose in the fully assembled 50S ribosomal subunit. The polypeptide is Ribosomal RNA large subunit methyltransferase E (Shewanella loihica (strain ATCC BAA-1088 / PV-4)).